Here is a 446-residue protein sequence, read N- to C-terminus: Actin-related protein 6 (446 aa).

Residues 1–11 (MTGRGGAKKSR) show a composition bias toward basic residues. Residues 1–24 (MTGRGGAKKSRAAGPAPPTTTLVL) form a disordered region.

This sequence belongs to the actin family. ARP6 subfamily. Component of the SWR1 chromatin remodeling complex.

It localises to the cytoplasm. It is found in the cytoskeleton. The protein localises to the nucleus. In terms of biological role, component of the SWR1 complex which mediates the ATP-dependent exchange of histone H2A for the H2A variant H2A.Z leading to transcriptional regulation of selected genes by chromatin remodeling. Involved in chromosome stability. This is Actin-related protein 6 (arp-6) from Neurospora crassa (strain ATCC 24698 / 74-OR23-1A / CBS 708.71 / DSM 1257 / FGSC 987).